The following is a 186-amino-acid chain: Translation initiation factor IF-3 (186 aa).

Residues 1–21 (MINRSSGKDRDRSRSGDKELR) are disordered.

It belongs to the IF-3 family. Monomer.

The protein localises to the cytoplasm. In terms of biological role, IF-3 binds to the 30S ribosomal subunit and shifts the equilibrium between 70S ribosomes and their 50S and 30S subunits in favor of the free subunits, thus enhancing the availability of 30S subunits on which protein synthesis initiation begins. This is Translation initiation factor IF-3 from Borrelia turicatae (strain 91E135).